The chain runs to 209 residues: Mitochondrial import inner membrane translocase subunit Tim23 (209 aa).

A run of 3 helical transmembrane segments spans residues 73-93 (FELAFFTIGGCCMTGAAFGAM), 125-145 (ALWANTLGSLALLYSAFGVII), and 172-194 (GGLRGAARGGLAGLTLTGLYALY).

It belongs to the Tim17/Tim22/Tim23 family. Component of the TIM23 complex at least composed of TIMM23, TIMM17 (TIMM17A or TIMM17B) and TIMM50; within this complex, directly interacts with TIMM50. The complex interacts with the TIMM44 component of the PAM complex and with DNAJC15. Upon mitochondrial depolarization, interacts with PINK1; the interaction is required for PINK1 accumulation at the outer mitochondrial membrane, kinase activation by autophosphorylation and PRKN recruitement to mitochondria.

It is found in the mitochondrion inner membrane. Functionally, essential component of the TIM23 complex, a complex that mediates the translocation of transit peptide-containing proteins across the mitochondrial inner membrane. Has a role in the activation of stress-induced mitophagy by protecting PINK1 from OMA1-mediated degradation and facilitating its accumulation at the outer mitochondrial membrane in response to depolarization. The chain is Mitochondrial import inner membrane translocase subunit Tim23 (TIMM23) from Bos taurus (Bovine).